Reading from the N-terminus, the 984-residue chain is Ephrin type-B receptor 1 (984 aa).

The signal sequence occupies residues 1 to 17 (MALDCLLLFLLASAVAA). Residues 18 to 540 (MEETLMDTRT…YKSELREQLP (523 aa)) are Extracellular-facing. Residues 19–201 (EETLMDTRTA…FFKKCPSIVQ (183 aa)) enclose the Eph LBD domain. 2 consecutive Fibronectin type-III domains span residues 322-432 (VPSG…TNQA) and 433-528 (APST…TLTD). N334, N426, and N480 each carry an N-linked (GlcNAc...) asparagine glycan. Residues 541–563 (LIAGSAAAGVVFVVSLVAISIVC) form a helical membrane-spanning segment. The Cytoplasmic portion of the chain corresponds to 564–984 (SRKRAYSKEA…QMNQSPSVMA (421 aa)). A Phosphotyrosine modification is found at Y600. A Protein kinase domain is found at 619–882 (VKIEEVIGAG…EIVNTLDKMI (264 aa)). ATP is bound by residues 625–633 (IGAGEFGEV) and K651. The Proton acceptor role is filled by D744. The 65-residue stretch at 911-975 (TAFTTVDDWL…LSSIHSMRVQ (65 aa)) folds into the SAM domain. The residue at position 928 (Y928) is a Phosphotyrosine; by autocatalysis. The PDZ-binding signature appears at 982–984 (VMA).

Belongs to the protein kinase superfamily. Tyr protein kinase family. Ephrin receptor subfamily. Heterotetramer upon binding of the ligand. The heterotetramer is composed of an ephrin dimer and a receptor dimer. Oligomerization is probably required to induce biological responses. Interacts with EPHB6; transphosphorylates EPHB6 to form an active signaling complex. Interacts with PICK1. Interacts (through Tyr-594) with NCK1 (via SH2 domain); activates the JUN cascade to regulate cell adhesion. The ligand-activated form interacts (through Tyr-928) with GRB7 and GRB10 (via SH2 domains). The ligand-activated form interacts (residues within the catalytic domain) with GRB2 (via SH2 domain). Interacts with GRB2, SHC1 and SRC; activates the MAPK/ERK cascade to regulate cell migration. Interacts with CBL; regulates receptor degradation through ubiquitination. Interacts with ACP1. Phosphorylated. Autophosphorylation is stimulated by the ligand EFNB1. Required for interaction with SH2 domain-containing interactors, for activation of the MAPK/ERK and JUN signaling cascades and for ubiquitination by CBL. Post-translationally, ubiquitinated; (EFNB1)ligand-induced poly- and/or multi-ubiquitination by CBL is regulated by SRC and leads to lysosomal degradation. As to expression, expressed in neural stem and progenitor cells in the dentate gyrus. Expressed in myogenic progenitor cells.

The protein resides in the cell membrane. It localises to the early endosome membrane. It is found in the cell projection. Its subcellular location is the dendrite. The enzyme catalyses L-tyrosyl-[protein] + ATP = O-phospho-L-tyrosyl-[protein] + ADP + H(+). Its function is as follows. Receptor tyrosine kinase which binds promiscuously transmembrane ephrin-B family ligands residing on adjacent cells, leading to contact-dependent bidirectional signaling into neighboring cells. The signaling pathway downstream of the receptor is referred to as forward signaling while the signaling pathway downstream of the ephrin ligand is referred to as reverse signaling. Cognate/functional ephrin ligands for this receptor include EFNB1, EFNB2 and EFNB3. During nervous system development, regulates retinal axon guidance redirecting ipsilaterally ventrotemporal retinal ganglion cells axons at the optic chiasm midline. This probably requires repulsive interaction with EFNB2. In the adult nervous system together with EFNB3, regulates chemotaxis, proliferation and polarity of the hippocampus neural progenitors. In addition to its role in axon guidance also plays an important redundant role with other ephrin-B receptors in development and maturation of dendritic spines and synapse formation. May also regulate angiogenesis. More generally, may play a role in targeted cell migration and adhesion. Upon activation by EFNB1 and probably other ephrin-B ligands activates the MAPK/ERK and the JNK signaling cascades to regulate cell migration and adhesion respectively. Involved in the maintenance of the pool of satellite cells (muscle stem cells) by promoting their self-renewal and reducing their activation and differentiation. The sequence is that of Ephrin type-B receptor 1 (Ephb1) from Mus musculus (Mouse).